The chain runs to 375 residues: Queuine tRNA-ribosyltransferase (375 aa).

Asp89 (proton acceptor) is an active-site residue. Substrate contacts are provided by residues 89-93 (DSGGF), Asp143, Gln187, and Gly214. The RNA binding stretch occupies residues 245–251 (GVGKPED). Asp264 (nucleophile) is an active-site residue. The tract at residues 269–273 (TRNAR) is RNA binding; important for wobble base 34 recognition. 4 residues coordinate Zn(2+): Cys302, Cys304, Cys307, and His333.

Belongs to the queuine tRNA-ribosyltransferase family. In terms of assembly, homodimer. Within each dimer, one monomer is responsible for RNA recognition and catalysis, while the other monomer binds to the replacement base PreQ1. The cofactor is Zn(2+).

The enzyme catalyses 7-aminomethyl-7-carbaguanine + guanosine(34) in tRNA = 7-aminomethyl-7-carbaguanosine(34) in tRNA + guanine. It participates in tRNA modification; tRNA-queuosine biosynthesis. Catalyzes the base-exchange of a guanine (G) residue with the queuine precursor 7-aminomethyl-7-deazaguanine (PreQ1) at position 34 (anticodon wobble position) in tRNAs with GU(N) anticodons (tRNA-Asp, -Asn, -His and -Tyr). Catalysis occurs through a double-displacement mechanism. The nucleophile active site attacks the C1' of nucleotide 34 to detach the guanine base from the RNA, forming a covalent enzyme-RNA intermediate. The proton acceptor active site deprotonates the incoming PreQ1, allowing a nucleophilic attack on the C1' of the ribose to form the product. After dissociation, two additional enzymatic reactions on the tRNA convert PreQ1 to queuine (Q), resulting in the hypermodified nucleoside queuosine (7-(((4,5-cis-dihydroxy-2-cyclopenten-1-yl)amino)methyl)-7-deazaguanosine). This chain is Queuine tRNA-ribosyltransferase, found in Salmonella enteritidis PT4 (strain P125109).